Consider the following 1402-residue polypeptide: Nuclear pore complex protein Nup160 (1402 aa).

Residues Ser-10, Ser-456, Ser-915, and Ser-1123 each carry the phosphoserine modification.

Part of the nuclear pore complex (NPC). Forms part of the NUP160 subcomplex in the nuclear pore which is composed of NUP160, NUP133, NUP107 and NUP96. This complex plays a role in RNA export and in tethering NUP98 and NUP153 to the nucleus.

It localises to the nucleus. Its subcellular location is the nuclear pore complex. Its function is as follows. Functions as a component of the nuclear pore complex (NPC). Involved in poly(A)+ RNA transport. This Mus musculus (Mouse) protein is Nuclear pore complex protein Nup160 (Nup160).